Reading from the N-terminus, the 100-residue chain is Small ribosomal subunit protein uS14c (100 aa).

The protein belongs to the universal ribosomal protein uS14 family. Part of the 30S ribosomal subunit.

Its subcellular location is the plastid. It localises to the chloroplast. Functionally, binds 16S rRNA, required for the assembly of 30S particles. The polypeptide is Small ribosomal subunit protein uS14c (Cyanidium caldarium (Red alga)).